A 774-amino-acid polypeptide reads, in one-letter code: Vezatin (774 aa).

2 consecutive transmembrane segments (helical) span residues 138–158 (IATPNIWETSILFVFLSAVAA) and 163–183 (SISSSLIWGPSLILFAAFTVL). Positions 430-457 (VRSLQLHLKALLNEVIVLEDELDKLSSC) form a coiled coil. The segment covering 746–757 (FGDEWDDDDDNE) has biased composition (acidic residues). Residues 746–774 (FGDEWDDDDDNEDHDHDKERNNDSSQLEG) are disordered. Residues 758–767 (DHDHDKERNN) show a composition bias toward basic and acidic residues.

Belongs to the vezatin family. Interacts with myosin VIIa and the cadherin-catenins complex.

The protein localises to the cell membrane. It localises to the cell junction. The protein resides in the adherens junction. It is found in the nucleus. In terms of biological role, plays a pivotal role in the establishment of adherens junctions and their maintenance in adult life. This chain is Vezatin (vezt), found in Xenopus laevis (African clawed frog).